The sequence spans 289 residues: 4-diphosphocytidyl-2-C-methyl-D-erythritol kinase (289 aa).

The active site involves K11. 95-105 (PMGGGIGGGSS) lines the ATP pocket. Residue D137 is part of the active site.

Belongs to the GHMP kinase family. IspE subfamily.

It carries out the reaction 4-CDP-2-C-methyl-D-erythritol + ATP = 4-CDP-2-C-methyl-D-erythritol 2-phosphate + ADP + H(+). It functions in the pathway isoprenoid biosynthesis; isopentenyl diphosphate biosynthesis via DXP pathway; isopentenyl diphosphate from 1-deoxy-D-xylulose 5-phosphate: step 3/6. Its function is as follows. Catalyzes the phosphorylation of the position 2 hydroxy group of 4-diphosphocytidyl-2C-methyl-D-erythritol. The sequence is that of 4-diphosphocytidyl-2-C-methyl-D-erythritol kinase from Aeromonas hydrophila subsp. hydrophila (strain ATCC 7966 / DSM 30187 / BCRC 13018 / CCUG 14551 / JCM 1027 / KCTC 2358 / NCIMB 9240 / NCTC 8049).